The chain runs to 144 residues: 3-hydroxyacyl-[acyl-carrier-protein] dehydratase FabZ (144 aa).

The active site involves H47.

It belongs to the thioester dehydratase family. FabZ subfamily.

Its subcellular location is the cytoplasm. It catalyses the reaction a (3R)-hydroxyacyl-[ACP] = a (2E)-enoyl-[ACP] + H2O. Functionally, involved in unsaturated fatty acids biosynthesis. Catalyzes the dehydration of short chain beta-hydroxyacyl-ACPs and long chain saturated and unsaturated beta-hydroxyacyl-ACPs. This is 3-hydroxyacyl-[acyl-carrier-protein] dehydratase FabZ from Alcanivorax borkumensis (strain ATCC 700651 / DSM 11573 / NCIMB 13689 / SK2).